Here is a 257-residue protein sequence, read N- to C-terminus: Pimeloyl-[acyl-carrier protein] methyl ester esterase (257 aa).

The 227-residue stretch at 16–242 folds into the AB hydrolase-1 domain; that stretch reads LVLLHGWGLN…AAHAPFISHP (227 aa). Substrate-binding positions include Trp22, 82–83, and 143–147; these read SL and FLGLQ. Catalysis depends on Ser82, which acts as the Nucleophile. Active-site residues include Asp207 and His235. His235 is a binding site for substrate.

This sequence belongs to the AB hydrolase superfamily. Carboxylesterase BioH family. In terms of assembly, monomer.

The protein resides in the cytoplasm. The enzyme catalyses 6-carboxyhexanoyl-[ACP] methyl ester + H2O = 6-carboxyhexanoyl-[ACP] + methanol + H(+). It functions in the pathway cofactor biosynthesis; biotin biosynthesis. Its function is as follows. The physiological role of BioH is to remove the methyl group introduced by BioC when the pimeloyl moiety is complete. It allows to synthesize pimeloyl-ACP via the fatty acid synthetic pathway through the hydrolysis of the ester bonds of pimeloyl-ACP esters. The chain is Pimeloyl-[acyl-carrier protein] methyl ester esterase from Sodalis glossinidius (strain morsitans).